The sequence spans 255 residues: Methylthioribulose-1-phosphate dehydratase (255 aa).

Substrate is bound at residue C111. Positions 128 and 130 each coordinate Zn(2+). E157 (proton donor/acceptor) is an active-site residue. H213 serves as a coordination point for Zn(2+).

This sequence belongs to the aldolase class II family. MtnB subfamily. It depends on Zn(2+) as a cofactor.

Its subcellular location is the cytoplasm. The catalysed reaction is 5-(methylsulfanyl)-D-ribulose 1-phosphate = 5-methylsulfanyl-2,3-dioxopentyl phosphate + H2O. The protein operates within amino-acid biosynthesis; L-methionine biosynthesis via salvage pathway; L-methionine from S-methyl-5-thio-alpha-D-ribose 1-phosphate: step 2/6. Its function is as follows. Catalyzes the dehydration of methylthioribulose-1-phosphate (MTRu-1-P) into 2,3-diketo-5-methylthiopentyl-1-phosphate (DK-MTP-1-P). The sequence is that of Methylthioribulose-1-phosphate dehydratase from Talaromyces stipitatus (strain ATCC 10500 / CBS 375.48 / QM 6759 / NRRL 1006) (Penicillium stipitatum).